The chain runs to 438 residues: Adenylyltransferase and sulfurtransferase MOCS3 (438 aa).

ATP-binding positions include glycine 80, aspartate 101, 108–112 (TNLHR), lysine 125, and 169–170 (DN). Cysteine 210 and cysteine 213 together coordinate Zn(2+). The active-site Glycyl thioester intermediate; for adenylyltransferase activity is cysteine 227. 2 residues coordinate Zn(2+): cysteine 285 and cysteine 288. Residues 335-436 (SKQRHVLVDV…WTRNVDKEFP (102 aa)) enclose the Rhodanese domain. The active-site Cysteine persulfide intermediate; for sulfurtransferase activity is cysteine 392.

In the N-terminal section; belongs to the HesA/MoeB/ThiF family. UBA4 subfamily. The cofactor is Zn(2+).

Its subcellular location is the cytoplasm. The protein localises to the cytosol. The catalysed reaction is [molybdopterin-synthase sulfur-carrier protein]-C-terminal Gly-Gly + ATP + H(+) = [molybdopterin-synthase sulfur-carrier protein]-C-terminal Gly-Gly-AMP + diphosphate. It catalyses the reaction [molybdopterin-synthase sulfur-carrier protein]-C-terminal Gly-Gly-AMP + S-sulfanyl-L-cysteinyl-[cysteine desulfurase] + AH2 = [molybdopterin-synthase sulfur-carrier protein]-C-terminal-Gly-aminoethanethioate + L-cysteinyl-[cysteine desulfurase] + A + AMP + 2 H(+). The protein operates within tRNA modification; 5-methoxycarbonylmethyl-2-thiouridine-tRNA biosynthesis. Its pathway is cofactor biosynthesis; molybdopterin biosynthesis. In terms of biological role, plays a central role in 2-thiolation of mcm(5)S(2)U at tRNA wobble positions of cytosolic tRNA(Lys), tRNA(Glu) and tRNA(Gln). Also essential during biosynthesis of the molybdenum cofactor. Acts by mediating the C-terminal thiocarboxylation of sulfur carriers URM1 and MOCS2A. Its N-terminus first activates URM1 and MOCS2A as acyl-adenylates (-COAMP), then the persulfide sulfur on the catalytic cysteine is transferred to URM1 and MOCS2A to form thiocarboxylation (-COSH) of their C-terminus. The reaction probably involves hydrogen sulfide that is generated from the persulfide intermediate and that acts as a nucleophile towards URM1 and MOCS2A. Subsequently, a transient disulfide bond is formed. Does not use thiosulfate as sulfur donor; NFS1 probably acting as a sulfur donor for thiocarboxylation reactions. The chain is Adenylyltransferase and sulfurtransferase MOCS3 from Culex quinquefasciatus (Southern house mosquito).